The primary structure comprises 990 residues: MRSFIKSHRKSNSLESDSDIDFKQLKRKNASTSQLSPPRYNTDYYDPVTSSPKTPTHSHTTSDSLPQKHSPGFESLHRLFNNKLFKKASNSSLNSYLANTDSQSRRSSKDQDPLAPSFHVLKTSSNPASQDSELPVIKGVITHTWGNHSKHNDPHVIVLNDPKTSFETLRSSDLEPPPRLTSKTTRSSVSSERSWSTRDHSMSPPLTSINQDIDIPEDMATRSKNTLINKKKMENRQARIHSNDDLIAMRKNSSDTLPQTAEFFASDKLPGDSTPILEIPESPPPVITLEKYNSSLSDAKELSRSKNVRSNRTSVVSMTQSEESRWSNHLMVNSNHNQNKLRDSDDSDYSNAIDEEDDDDADDDDEASQFSFEYSNLSGRTPSVKYYSKPEPKQMVYIDDLYDDEDFDEDMNYYDENEVSEFLQEEMASNKNNINTDTSVLKDLSSPSINDHSNEKPIYKPTIQMRVNKPKVHRYNDLFALSDEDDPSFNDDDEFDEDEEEGGDDNDEEDEIDEEYDQKVSDECGQSIELQSDDIHSDYGVEYYNDFGGDLNLQNDVQKHHINKEQQYISDEEFDDAITDFNMAKHIIEEEVVLDKAEALRYQKDAEPVQSKTSEDVVNYVDEDSNLRINEKLEKGDVTYQKPTLLTEVKNKQFQKKPVASFADIFNLESDSEEDINNEDGLTGLSDVGLDEDDAVSSPILQSPFESQSLAEGLVSPVICTPGKPNIINKQIIPTIKCEPSSPQEKTIENNKSHTASNFKEYGLNHPLPPPARSQALKFHDLNSELDSELPALMSNLYFIDETEEDAYNELNDVTRDEDEYLDEINTVPEDFNFSDTENDNNAAKRMLRRSNKGSFRSTYSFTDKPQGVTTESSPIKNKLEVNNKTVTFFSSPGWSKSPGSEIGMQRSKSPVKPSSGYRPFGQGSKQFPITPSHEPNYSIEEDRIASTDEILESRTPPTTYMAPSPAFIPNYSLSPIQEASSSVTNSPKR.

The segment covering 1–11 (MRSFIKSHRKS) has biased composition (basic residues). 8 disordered regions span residues 1 to 73 (MRSF…SPGF), 97 to 134 (LANT…DSEL), 168 to 211 (TLRS…SINQ), 297 to 366 (SDAK…DDDE), 480 to 520 (ALSD…DQKV), 856 to 876 (FRST…SSPI), 893 to 937 (PGWS…HEPN), and 955 to 990 (RTPP…SPKR). Residues 49-64 (TSSPKTPTHSHTTSDS) show a composition bias toward low complexity. Residues 103–112 (QSRRSSKDQD) are compositionally biased toward basic and acidic residues. A compositionally biased stretch (polar residues) spans 122-132 (KTSSNPASQDS). Residues 180–194 (LTSKTTRSSVSSERS) show a composition bias toward low complexity. Residues 308–321 (VRSNRTSVVSMTQS) show a composition bias toward polar residues. Acidic residues-rich tracts occupy residues 345–366 (DDSD…DDDE) and 482–516 (SDED…DEEY). Polar residues-rich tracts occupy residues 924–936 (GSKQ…SHEP) and 972–990 (YSLS…SPKR).

Belongs to the ZRG8 family.

The protein localises to the cytoplasm. It localises to the bud. Its subcellular location is the bud neck. The protein resides in the bud tip. Functionally, involved in maintenance of polarized growth and daughter-cell-specific transcription. The chain is Zinc-regulated protein 8 (ZRG8) from Candida glabrata (strain ATCC 2001 / BCRC 20586 / JCM 3761 / NBRC 0622 / NRRL Y-65 / CBS 138) (Yeast).